Here is a 624-residue protein sequence, read N- to C-terminus: MNLEQLYDVIVVGGGHAGTEAALAAARLGVKTLLLTHNIDLLGQMSCNPAIGGIGKGHLVKEIDALDGAMAKAADQAGIQFRILNASKGPAVRATRAQADRVLYRKAIRTQLQSQANLTIFQQAVDDLKIEGGLVTGVVTQMGLTLKARAVVLTVGTFLGGKIHVGMNQYAGGRAGDPPSIALSKSLRDLDLPVGRLKTGTPPRIDRRTIDFSQMVEQPGDTPVPVFSYLGAASDHPQQVPCHITHTTEATHDIIRNNLDKSPMYAGVIEGVGPRYCPSIEDKIVRFADKTSHQIFVEPEGLTTEEIYPNGISTSLPFEVQVQFVRTIKGFENAHITRPGYAIEYDYFDPRGLTSFLQTKAIPNLFFAGQINGTTGYEEAAAQGIIAGMNAALQIKDQELWCPRRDEAYIGVLIDDLITCGTQEPYRMFTSRAEYRLLLREDNADLRLTEKGRQLGLVGDERWDSFSKKREAIESTQALLYNSWVRVHHNDLFKETLFNPMQHDCRAVEFLKRPEINYQHLLMMDDLNLPELPQEITEQIEIQNKYAGYIDRQQQEIEKLRKHENTLLPETLDYNDVVGLSSEVIQKLNRIKPTSLAQAGRISGVTPAALSLLLVHLKKSRLPV.

FAD-binding positions include 13 to 18, Val-125, and Ser-180; that span reads GGGHAG. NAD(+) is bound at residue 273 to 287; the sequence is GPRYCPSIEDKIVRF. Gln-370 contributes to the FAD binding site.

Belongs to the MnmG family. In terms of assembly, homodimer. Heterotetramer of two MnmE and two MnmG subunits. FAD is required as a cofactor.

The protein resides in the cytoplasm. NAD-binding protein involved in the addition of a carboxymethylaminomethyl (cmnm) group at the wobble position (U34) of certain tRNAs, forming tRNA-cmnm(5)s(2)U34. This is tRNA uridine 5-carboxymethylaminomethyl modification enzyme MnmG from Legionella pneumophila subsp. pneumophila (strain Philadelphia 1 / ATCC 33152 / DSM 7513).